The sequence spans 136 residues: Protein NrdI (136 aa).

This sequence belongs to the NrdI family.

In terms of biological role, probably involved in ribonucleotide reductase function. This chain is Protein NrdI, found in Klebsiella pneumoniae (strain 342).